The chain runs to 311 residues: Malate dehydrogenase (311 aa).

NAD(+)-binding positions include glycine 7–glycine 13 and aspartate 34. Substrate-binding residues include arginine 81 and arginine 87. NAD(+)-binding positions include asparagine 94 and isoleucine 117 to asparagine 119. Asparagine 119 and arginine 153 together coordinate substrate. Catalysis depends on histidine 177, which acts as the Proton acceptor. Methionine 227 contacts NAD(+).

Belongs to the LDH/MDH superfamily. MDH type 1 family. In terms of assembly, homodimer.

It catalyses the reaction (S)-malate + NAD(+) = oxaloacetate + NADH + H(+). Its function is as follows. Catalyzes the reversible oxidation of malate to oxaloacetate. The protein is Malate dehydrogenase of Shewanella baltica (strain OS155 / ATCC BAA-1091).